We begin with the raw amino-acid sequence, 194 residues long: Phosphoheptose isomerase (194 aa).

An SIS domain is found at 34–188; that stretch reads LANIFTKGKK…IEGVERIMFP (155 aa). 49-51 serves as a coordination point for substrate; it reads NGG. His58 and Glu62 together coordinate Zn(2+). Substrate contacts are provided by residues Glu62, 90-91, 116-118, Ser121, and Gln168; these read ND and STS. Residues Gln168 and His176 each contribute to the Zn(2+) site.

Belongs to the SIS family. GmhA subfamily. The cofactor is Zn(2+).

It localises to the cytoplasm. It catalyses the reaction 2 D-sedoheptulose 7-phosphate = D-glycero-alpha-D-manno-heptose 7-phosphate + D-glycero-beta-D-manno-heptose 7-phosphate. Its pathway is carbohydrate biosynthesis; D-glycero-D-manno-heptose 7-phosphate biosynthesis; D-glycero-alpha-D-manno-heptose 7-phosphate and D-glycero-beta-D-manno-heptose 7-phosphate from sedoheptulose 7-phosphate: step 1/1. Catalyzes the isomerization of sedoheptulose 7-phosphate in D-glycero-D-manno-heptose 7-phosphate. The chain is Phosphoheptose isomerase from Fusobacterium nucleatum subsp. nucleatum (strain ATCC 25586 / DSM 15643 / BCRC 10681 / CIP 101130 / JCM 8532 / KCTC 2640 / LMG 13131 / VPI 4355).